Consider the following 566-residue polypeptide: Membrane protein insertase YidC (566 aa).

5 helical membrane passes run 3 to 23 (IKRI…FNAW), 346 to 366 (GWLW…HAVV), 369 to 389 (WGWS…WFSA), 436 to 456 (GGCL…YVII), and 509 to 529 (MWIL…GLVL).

The protein belongs to the OXA1/ALB3/YidC family. Type 1 subfamily. Interacts with the Sec translocase complex via SecD. Specifically interacts with transmembrane segments of nascent integral membrane proteins during membrane integration.

The protein localises to the cell inner membrane. Its function is as follows. Required for the insertion and/or proper folding and/or complex formation of integral membrane proteins into the membrane. Involved in integration of membrane proteins that insert both dependently and independently of the Sec translocase complex, as well as at least some lipoproteins. Aids folding of multispanning membrane proteins. This is Membrane protein insertase YidC from Coxiella burnetii (strain CbuK_Q154) (Coxiella burnetii (strain Q154)).